Consider the following 331-residue polypeptide: 4-hydroxy-3-methylbut-2-enyl diphosphate reductase (331 aa).

Residue Cys-12 coordinates [4Fe-4S] cluster. Positions 43 and 81 each coordinate (2E)-4-hydroxy-3-methylbut-2-enyl diphosphate. Dimethylallyl diphosphate-binding residues include His-43 and His-81. Isopentenyl diphosphate contacts are provided by His-43 and His-81. Cys-103 is a [4Fe-4S] cluster binding site. A (2E)-4-hydroxy-3-methylbut-2-enyl diphosphate-binding site is contributed by His-131. Position 131 (His-131) interacts with dimethylallyl diphosphate. His-131 lines the isopentenyl diphosphate pocket. Catalysis depends on Glu-133, which acts as the Proton donor. Thr-170 contributes to the (2E)-4-hydroxy-3-methylbut-2-enyl diphosphate binding site. Cys-198 contributes to the [4Fe-4S] cluster binding site. (2E)-4-hydroxy-3-methylbut-2-enyl diphosphate is bound by residues Ser-226, Asn-228, and Ser-271. 3 residues coordinate dimethylallyl diphosphate: Ser-226, Asn-228, and Ser-271. The isopentenyl diphosphate site is built by Ser-226, Asn-228, and Ser-271.

The protein belongs to the IspH family. The cofactor is [4Fe-4S] cluster.

It carries out the reaction isopentenyl diphosphate + 2 oxidized [2Fe-2S]-[ferredoxin] + H2O = (2E)-4-hydroxy-3-methylbut-2-enyl diphosphate + 2 reduced [2Fe-2S]-[ferredoxin] + 2 H(+). The enzyme catalyses dimethylallyl diphosphate + 2 oxidized [2Fe-2S]-[ferredoxin] + H2O = (2E)-4-hydroxy-3-methylbut-2-enyl diphosphate + 2 reduced [2Fe-2S]-[ferredoxin] + 2 H(+). Its pathway is isoprenoid biosynthesis; dimethylallyl diphosphate biosynthesis; dimethylallyl diphosphate from (2E)-4-hydroxy-3-methylbutenyl diphosphate: step 1/1. It functions in the pathway isoprenoid biosynthesis; isopentenyl diphosphate biosynthesis via DXP pathway; isopentenyl diphosphate from 1-deoxy-D-xylulose 5-phosphate: step 6/6. Functionally, catalyzes the conversion of 1-hydroxy-2-methyl-2-(E)-butenyl 4-diphosphate (HMBPP) into a mixture of isopentenyl diphosphate (IPP) and dimethylallyl diphosphate (DMAPP). Acts in the terminal step of the DOXP/MEP pathway for isoprenoid precursor biosynthesis. The sequence is that of 4-hydroxy-3-methylbut-2-enyl diphosphate reductase from Listeria monocytogenes serotype 4b (strain CLIP80459).